Reading from the N-terminus, the 557-residue chain is MCSIAVHPTIQSVNLFEILQGKYAYVKGQTLYSSVRNSGTFFRQVFTNIYRDALSSCTYEDVLQDWIKYETSIRQRWKPSEKEDNAFKWSTFQSWFSTMKMTIDGIITKAITYIINTKCIASYERYIDWVATCGVVPVLNQRPNSKVVQMFKKHLEKEYSSVASSKSLTTIFHFLVESASSVLERLTSKFIPSYLEVSVTYDQYKCEYKASYQNKEIGVEVIIPPTIGSGKVVFNSPVQRLAENVMACHRTMEHAKICQLLNTGPLKAIVCSSSATVYKDILNHLDECGKKNDPKKELMQLLIKLAENKTVNGVTDVVEDFITDVSNKLVDRSKLFGDVNAEHPSDNLKKQVSNNVFKCLTQQINQQFETISKLEEERAFFLKKINQIETQLSKCQEEPQGTGGKPYNILTSSTLDALDGLSQSGLHLTSNQVTKGQSIVNSFFSQYVPPFRELQNDLHELWEHEIMQSFNLSPIIDNQGQRLFVRYTQDTIFFLLGPFTHNILGFVDMELLIEAYCTLSFYDIAEYLYSASRLAIYIVDIGQKYCSQPNLSDGSQS.

The protein belongs to the herpesviridae portal protein family. As to quaternary structure, homododecamerizes. Interacts with terminase subunits TRM1 and TRM3.

The protein resides in the virion. It localises to the host nucleus. Functionally, forms a portal in the viral capsid through which viral DNA is translocated during DNA packaging. Assembles as a dodecamer at a single fivefold axe of the T=16 icosahedric capsid. Binds to the molecular motor that translocates the viral DNA, termed terminase. The polypeptide is Portal protein (43) (Connochaetes taurinus (Blue wildebeest)).